The chain runs to 77 residues: UPF0346 protein LMOf2365_1885 (77 aa).

Belongs to the UPF0346 family.

The chain is UPF0346 protein LMOf2365_1885 from Listeria monocytogenes serotype 4b (strain F2365).